Consider the following 412-residue polypeptide: ATP phosphoribosyltransferase regulatory subunit (412 aa).

It belongs to the class-II aminoacyl-tRNA synthetase family. HisZ subfamily. Heteromultimer composed of HisG and HisZ subunits.

It is found in the cytoplasm. It functions in the pathway amino-acid biosynthesis; L-histidine biosynthesis; L-histidine from 5-phospho-alpha-D-ribose 1-diphosphate: step 1/9. Required for the first step of histidine biosynthesis. May allow the feedback regulation of ATP phosphoribosyltransferase activity by histidine. The sequence is that of ATP phosphoribosyltransferase regulatory subunit from Dehalococcoides mccartyi (strain ATCC BAA-2100 / JCM 16839 / KCTC 5957 / BAV1).